We begin with the raw amino-acid sequence, 313 residues long: Porphobilinogen deaminase (313 aa).

Cys240 is subject to S-(dipyrrolylmethanemethyl)cysteine.

This sequence belongs to the HMBS family. In terms of assembly, monomer. The cofactor is dipyrromethane.

It catalyses the reaction 4 porphobilinogen + H2O = hydroxymethylbilane + 4 NH4(+). It functions in the pathway porphyrin-containing compound metabolism; protoporphyrin-IX biosynthesis; coproporphyrinogen-III from 5-aminolevulinate: step 2/4. Functionally, tetrapolymerization of the monopyrrole PBG into the hydroxymethylbilane pre-uroporphyrinogen in several discrete steps. In Moorella thermoacetica (strain ATCC 39073 / JCM 9320), this protein is Porphobilinogen deaminase.